We begin with the raw amino-acid sequence, 161 residues long: Host protease inhibitor (161 aa).

In terms of biological role, plays a role in the inhibition of bacterial toxin-antitoxin system by blocking the action of host Lon protease. This chain is Host protease inhibitor (pin), found in Enterobacteria phage T4 (Bacteriophage T4).